A 463-amino-acid chain; its full sequence is Argininosuccinate lyase (463 aa).

S27, N115, and T161 together coordinate 2-(N(omega)-L-arginino)succinate. Residue H162 is the Proton acceptor of the active site. Catalysis depends on S283, which acts as the Proton donor. 2-(N(omega)-L-arginino)succinate is bound by residues N291, Y323, Q328, and K331.

The protein belongs to the lyase 1 family. Argininosuccinate lyase subfamily. Homotetramer.

It carries out the reaction 2-(N(omega)-L-arginino)succinate = fumarate + L-arginine. Its pathway is amino-acid biosynthesis; L-arginine biosynthesis; L-arginine from L-ornithine and carbamoyl phosphate: step 3/3. The sequence is that of Argininosuccinate lyase (ARG4) from Saccharomyces paradoxus (Yeast).